Consider the following 147-residue polypeptide: Catabolic 3-dehydroquinase 2 (147 aa).

The Proton acceptor role is filled by Y23. Residues N74, H80, and D87 each contribute to the substrate site. The active-site Proton donor is the H100. Substrate-binding positions include 101 to 102 (IT) and R111.

This sequence belongs to the type-II 3-dehydroquinase family. Homododecamer. Adopts a ring-like structure, composed of an arrangement of two hexameric rings stacked on top of one another.

The catalysed reaction is 3-dehydroquinate = 3-dehydroshikimate + H2O. The protein operates within aromatic compound metabolism; 3,4-dihydroxybenzoate biosynthesis; 3,4-dihydroxybenzoate from 3-dehydroquinate: step 1/2. Functionally, is involved in the catabolism of quinate. Allows the utilization of quinate as carbon source via the beta-ketoadipate pathway. The polypeptide is Catabolic 3-dehydroquinase 2 (Aspergillus terreus (strain NIH 2624 / FGSC A1156)).